We begin with the raw amino-acid sequence, 234 residues long: Ponticulin-like protein J (234 aa).

The N-terminal stretch at M1 to A20 is a signal peptide. N-linked (GlcNAc...) asparagine glycans are attached at residues N19, N143, N166, and N206. Residues T115–N213 are disordered. Over residues K154 to T195 the composition is skewed to low complexity. A lipid anchor (GPI-like-anchor amidated asparagine) is attached at N212. N213 carries an N-linked (GlcNAc...) asparagine glycan. A propeptide spans N213 to F234 (removed in mature form).

It belongs to the ponticulin family. Post-translationally, the GPI-like-anchor contains a phosphoceramide group, rather than a phosphatidyl group.

It localises to the cell membrane. Functionally, binds F-actin and nucleates actin assembly. This chain is Ponticulin-like protein J (ponJ), found in Dictyostelium discoideum (Social amoeba).